The sequence spans 397 residues: Phosphoglycerate kinase (397 aa).

Substrate-binding positions include 25–27, Arg-41, 64–67, Arg-118, and Arg-151; these read DLN and HLGR. Residues Lys-202, Glu-324, and 350-353 each bind ATP; that span reads GGDT.

This sequence belongs to the phosphoglycerate kinase family. Monomer.

It localises to the cytoplasm. The catalysed reaction is (2R)-3-phosphoglycerate + ATP = (2R)-3-phospho-glyceroyl phosphate + ADP. It functions in the pathway carbohydrate degradation; glycolysis; pyruvate from D-glyceraldehyde 3-phosphate: step 2/5. This is Phosphoglycerate kinase from Acidovorax sp. (strain JS42).